A 572-amino-acid chain; its full sequence is FAD-linked oxidoreductase patO (572 aa).

The N-terminal stretch at 1–23 is a signal peptide; sequence MRLSIYSSILLLRAMCLVRPTFG. 10 N-linked (GlcNAc...) asparagine glycosylation sites follow: Asn48, Asn71, Asn126, Asn180, Asn309, Asn354, Asn381, Asn422, Asn446, and Asn481. Positions 115–295 constitute an FAD-binding PCMH-type domain; the sequence is CAPGDMVVYS…YSMTVKAFPD (181 aa).

This sequence belongs to the oxygen-dependent FAD-linked oxidoreductase family. FAD serves as cofactor.

The protein resides in the vacuole lumen. The protein operates within mycotoxin biosynthesis; patulin biosynthesis. In terms of biological role, FAD-linked oxidoreductase; part of the gene cluster that mediates the biosynthesis of patulin, an acetate-derived tetraketide mycotoxin produced by several fungal species that shows antimicrobial properties against several bacteria. PatO acts with patJ in the vacuole to convert gentisyl alcohol to isoepoxydon. The pathway begins with the synthesis of 6-methylsalicylic acid by the polyketide synthase (PKS) patK via condensation of acetate and malonate units. The 6-methylsalicylic acid decarboxylase patG then catalyzes the decarboxylation of 6-methylsalicylic acid to yield m-cresol (also known as 3-methylphenol). These first reactions occur in the cytosol. The intermediate m-cresol is then transported into the endoplasmic reticulum where the cytochrome P450 monooxygenase patH converts it to m-hydroxybenzyl alcohol, which is further converted to gentisyl alcohol by the cytochrome P450 monooxygenase patI. The oxidoreductases patJ and patO further convert gentisyl alcohol to isoepoxydon in the vacuole. PatN catalyzes then the transformation of isoepoxydon into phyllostine. The cluster protein patF is responsible for the conversion from phyllostine to neopatulin whereas the alcohol dehydrogenase patD converts neopatulin to E-ascladiol. The steps between isoepoxydon and E-ascladiol occur in the cytosol, and E-ascladiol is probably secreted to the extracellular space by one of the cluster-specific transporters patC or patM. Finally, the secreted patulin synthase patE catalyzes the conversion of E-ascladiol to patulin. This Aspergillus clavatus (strain ATCC 1007 / CBS 513.65 / DSM 816 / NCTC 3887 / NRRL 1 / QM 1276 / 107) protein is FAD-linked oxidoreductase patO.